The chain runs to 335 residues: Stearoyl-CoA desaturase 5 (335 aa).

The Cytoplasmic portion of the chain corresponds to 1–54 (MPGPAVDAEKVPFRSAKEEIRAGVGVEGSEGGGGGGGRERPGARGHRQDIVWRN). Residues 24–44 (VGVEGSEGGGGGGGRERPGAR) are disordered. A compositionally biased stretch (gly residues) spans 25 to 36 (GVEGSEGGGGGG). Residue asparagine 54 participates in substrate binding. Residues 55–75 (VFLMSLLHLAAVYSLVLIPKA) form a helical membrane-spanning segment. The Lumenal segment spans residues 76–77 (QP). The helical transmembrane segment at 78–98 (LTLLWAYFCFLLTALGVTAGA) threads the bilayer. 2 residues coordinate Fe cation: histidine 99 and histidine 104. Positions 99–104 (HRLWSH) match the Histidine box-1 motif. At 99–198 (HRLWSHRSYK…VVRFQRKYYK (100 aa)) the chain is on the cytoplasmic side. Residues asparagine 127, arginine 134, and aspartate 135 each coordinate substrate. Histidine 136, histidine 139, and histidine 140 together coordinate Fe cation. The short motif at 136–140 (HRVHH) is the Histidine box-2 element. 2 residues coordinate substrate: arginine 167 and lysine 168. The chain crosses the membrane as a helical span at residues 199–219 (ITVVLMCFVVPTLVPWYIWGE). At 220-227 (SLWNSYFL) the chain is on the lumenal side. Residues 228 to 247 (ASILRYTISLNVTWLVNSVA) traverse the membrane as a helical segment. Tryptophan 241 is a binding site for substrate. 4 residues coordinate Fe cation: histidine 248, histidine 277, histidine 280, and histidine 281. Topologically, residues 248–335 (HMYGNRPYDK…RKARTGDGSA (88 aa)) are cytoplasmic. Residues 277-281 (HNYHH) carry the Histidine box-3 motif.

The protein belongs to the fatty acid desaturase type 1 family. May self-associate and form homodimers. The cofactor is Fe(2+). Detected in brain.

It is found in the endoplasmic reticulum membrane. The enzyme catalyses octadecanoyl-CoA + 2 Fe(II)-[cytochrome b5] + O2 + 2 H(+) = (9Z)-octadecenoyl-CoA + 2 Fe(III)-[cytochrome b5] + 2 H2O. It catalyses the reaction hexadecanoyl-CoA + 2 Fe(II)-[cytochrome b5] + O2 + 2 H(+) = (9Z)-hexadecenoyl-CoA + 2 Fe(III)-[cytochrome b5] + 2 H2O. Its function is as follows. Stearoyl-CoA desaturase that utilizes O(2) and electrons from reduced cytochrome b5 to introduce the first double bond into saturated fatty acyl-CoA substrates. Catalyzes the insertion of a cis double bond at the delta-9 position into fatty acyl-CoA substrates including palmitoyl-CoA and stearoyl-CoA. Gives rise to a mixture of 16:1 and 18:1 unsaturated fatty acids. Involved in neuronal cell proliferation and differentiation through down-regulation of EGFR/AKT/MAPK and Wnt signaling pathways. This Bos taurus (Bovine) protein is Stearoyl-CoA desaturase 5 (SCD5).